A 109-amino-acid chain; its full sequence is Staphostatin B (109 aa).

The binds to staphopain B stretch occupies residues 97 to 101 (IGTSR).

Belongs to the protease inhibitor I57 (SspC) family. Forms a stable non-covalent complex with prematurely activated/folded SspB.

It localises to the cytoplasm. Specifically inhibits the cysteine protease staphopain B (SspB) by blocking the active site of the enzyme. Probably required to protect cytoplasmic proteins from being degraded by prematurely activated/folded prostaphopain B. Also involved in growth capacity, viability and bacterial morphology. This Staphylococcus aureus (strain Mu50 / ATCC 700699) protein is Staphostatin B (sspC).